Reading from the N-terminus, the 149-residue chain is 1,4-dihydroxy-2-naphthoyl-CoA hydrolase (149 aa).

Residue D19 is part of the active site.

It belongs to the 4-hydroxybenzoyl-CoA thioesterase family. DHNA-CoA hydrolase subfamily.

The catalysed reaction is 1,4-dihydroxy-2-naphthoyl-CoA + H2O = 1,4-dihydroxy-2-naphthoate + CoA + H(+). It functions in the pathway cofactor biosynthesis; phylloquinone biosynthesis. The protein operates within quinol/quinone metabolism; 1,4-dihydroxy-2-naphthoate biosynthesis; 1,4-dihydroxy-2-naphthoate from chorismate: step 7/7. In terms of biological role, catalyzes the hydrolysis of 1,4-dihydroxy-2-naphthoyl-CoA (DHNA-CoA) to 1,4-dihydroxy-2-naphthoate (DHNA), a reaction involved in phylloquinone (vitamin K1) biosynthesis. This Synechococcus sp. (strain CC9902) protein is 1,4-dihydroxy-2-naphthoyl-CoA hydrolase.